The following is a 174-amino-acid chain: Variant surface antigen F (174 aa).

The N-terminal stretch at 1–29 (MKKSIFSKKLLFSFGSLVALAAIPLITIS) is a signal peptide. The N-palmitoyl cysteine moiety is linked to residue Cys30. Cys30 carries the S-diacylglycerol cysteine lipid modification. Residues 32–174 (QTNTDQSQQP…PEQGNSQVSK (143 aa)) form a disordered region. A compositionally biased stretch (gly residues) spans 43–53 (SGSGSGSGTSN). 9 repeat units span residues 55-67 (SGSTPTPEQGNNQ), 68-80 (GGSTPTPEQGNNQ), 81-93 (GGSTPTPEQGNNQ), 94-106 (GGSTPTPEQGNNQ), 107-119 (GGSTPTPEQGNNQ), 120-132 (GGSTPTPEQGNNQ), 133-145 (GGSTPTPEQGNNQ), 146-158 (GGSTPTPEQGNNQ), and 159-171 (GGSTPTPEQGNSQ). The 9 X 13 AA tandem repeats stretch occupies residues 55 to 171 (SGSTPTPEQG…TPTPEQGNSQ (117 aa)). The segment covering 62-174 (EQGNNQGGST…PEQGNSQVSK (113 aa)) has biased composition (polar residues).

The protein localises to the cell membrane. In terms of biological role, responsible for the antigenic diversity for host adaptation. Expression in E.coli of a construct containing vlpD, vlpE, and vlpF yields antigenically distinguishable products corresponding to each gene. This is Variant surface antigen F (vlpF) from Mesomycoplasma hyorhinis (Mycoplasma hyorhinis).